Reading from the N-terminus, the 186-residue chain is Elongation factor P (186 aa).

This sequence belongs to the elongation factor P family.

The protein localises to the cytoplasm. The protein operates within protein biosynthesis; polypeptide chain elongation. Involved in peptide bond synthesis. Stimulates efficient translation and peptide-bond synthesis on native or reconstituted 70S ribosomes in vitro. Probably functions indirectly by altering the affinity of the ribosome for aminoacyl-tRNA, thus increasing their reactivity as acceptors for peptidyl transferase. The polypeptide is Elongation factor P (Shewanella frigidimarina (strain NCIMB 400)).